Reading from the N-terminus, the 422-residue chain is Acetyl-CoA acetyltransferase, mitochondrial (422 aa).

The N-terminal 28 residues, 1 to 28 (MPVLAALLRRGPLLQRRVQEIRYAERSY), are a transit peptide targeting the mitochondrion. At Lys61 the chain carries N6-acetyllysine; alternate. Residue Lys61 is modified to N6-succinyllysine; alternate. Position 73 is an N6-succinyllysine (Lys73). Catalysis depends on Cys121, which acts as the Acyl-thioester intermediate. N6-acetyllysine; alternate occurs at positions 169, 176, 185, and 197. N6-succinyllysine; alternate occurs at positions 169, 176, 185, and 197. Tyr214 contributes to the CoA binding site. Tyr214 is a binding site for K(+). Position 218 is an N6-acetyllysine; alternate (Lys218). The residue at position 218 (Lys218) is an N6-succinyllysine; alternate. Lys238 carries the post-translational modification N6-succinyllysine. Position 240 is an N6-acetyllysine; alternate (Lys240). An N6-succinyllysine; alternate modification is found at Lys240. N6-acetyllysine is present on residues Lys246 and Lys252. CoA contacts are provided by residues 253-255 (RVD) and Lys258. The residue at position 258 (Lys258) is an N6-acetyllysine; alternate. Residue Lys258 is modified to N6-succinyllysine; alternate. N6-succinyllysine is present on residues Lys261 and Lys263. Residues Ala275, Ala276, and Ala278 each coordinate K(+). Ser279 contributes to the CoA binding site. N6-acetyllysine is present on Lys333. Val376 contributes to the K(+) binding site. The Proton donor/acceptor role is filled by Cys408.

This sequence belongs to the thiolase-like superfamily. Thiolase family. In terms of assembly, homotetramer. Post-translationally, succinylation at Lys-263, adjacent to a coenzyme A binding site. Desuccinylated by SIRT5.

Its subcellular location is the mitochondrion. It carries out the reaction 2 acetyl-CoA = acetoacetyl-CoA + CoA. The catalysed reaction is propanoyl-CoA + acetyl-CoA = 2-methyl-3-oxobutanoyl-CoA + CoA. Its pathway is lipid metabolism; fatty acid beta-oxidation. Its activity is regulated as follows. Activated by potassium ions, but not sodium ions. Functionally, this is one of the enzymes that catalyzes the last step of the mitochondrial beta-oxidation pathway, an aerobic process breaking down fatty acids into acetyl-CoA. Using free coenzyme A/CoA, catalyzes the thiolytic cleavage of medium- to long-chain 3-oxoacyl-CoAs into acetyl-CoA and a fatty acyl-CoA shortened by two carbon atoms. The activity of the enzyme is reversible and it can also catalyze the condensation of two acetyl-CoA molecules into acetoacetyl-CoA. Thereby, it plays a major role in ketone body metabolism. The chain is Acetyl-CoA acetyltransferase, mitochondrial (ACAT1) from Bos taurus (Bovine).